Here is a 665-residue protein sequence, read N- to C-terminus: Kinesin-like protein KIF22 (665 aa).

The 326-residue stretch at 43–368 (RVRVAVRLRP…LNFAARSKEV (326 aa)) folds into the Kinesin motor domain. 127 to 134 (GPTGAGKT) is a binding site for ATP. The segment at 379–428 (QPHALGPVKLSQKELLGPPEAKRARGPEEEEIGSPEPMAAPASASQKLSP) is disordered. 3 positions are modified to phosphoserine: serine 412, serine 427, and serine 452. A compositionally biased stretch (low complexity) spans 412–428 (SPEPMAAPASASQKLSP). Residue lysine 465 forms a Glycyl lysine isopeptide (Lys-Gly) (interchain with G-Cter in SUMO2) linkage. Residues 465 to 508 (KRERMVLMKTVEEKDLEIERLKTKQKELEAKMLAQKAEEKENHC) are a coiled coil. Phosphoserine is present on residues serine 543, serine 562, and serine 581.

Belongs to the TRAFAC class myosin-kinesin ATPase superfamily. Kinesin family. Interacts with FAM83D. Interacts with SIAH1. Ubiquitinated; mediated by SIAH1 and leading to its subsequent proteasomal degradation. Expressed in bone, cartilage, joint capsule, ligament, skin, and primary cultured chondrocytes.

The protein resides in the nucleus. Its subcellular location is the cytoplasm. It is found in the cytoskeleton. In terms of biological role, kinesin family member that is involved in spindle formation and the movements of chromosomes during mitosis and meiosis. Binds to microtubules and to DNA. Plays a role in congression of laterally attached chromosomes in NDC80-depleted cells. In Homo sapiens (Human), this protein is Kinesin-like protein KIF22 (KIF22).